A 270-amino-acid polypeptide reads, in one-letter code: Phosphatidylglycerol--prolipoprotein diacylglyceryl transferase (270 aa).

A run of 4 helical transmembrane segments spans residues 19–39 (FPVY…LWLA), 54–74 (IDLV…YYVI), 92–112 (QGGL…ILFA), and 116–136 (GLSF…GQAI). R138 provides a ligand contact to a 1,2-diacyl-sn-glycero-3-phospho-(1'-sn-glycerol). Transmembrane regions (helical) follow at residues 178–198 (HPTF…LLAL), 206–226 (GELF…VEGL), and 236–256 (LRIA…FIIV).

This sequence belongs to the Lgt family.

It localises to the cell membrane. The enzyme catalyses L-cysteinyl-[prolipoprotein] + a 1,2-diacyl-sn-glycero-3-phospho-(1'-sn-glycerol) = an S-1,2-diacyl-sn-glyceryl-L-cysteinyl-[prolipoprotein] + sn-glycerol 1-phosphate + H(+). The protein operates within protein modification; lipoprotein biosynthesis (diacylglyceryl transfer). Catalyzes the transfer of the diacylglyceryl group from phosphatidylglycerol to the sulfhydryl group of the N-terminal cysteine of a prolipoprotein, the first step in the formation of mature lipoproteins. The protein is Phosphatidylglycerol--prolipoprotein diacylglyceryl transferase of Bacillus mycoides (strain KBAB4) (Bacillus weihenstephanensis).